We begin with the raw amino-acid sequence, 814 residues long: Lon protease 1 (814 aa).

Basic and acidic residues predominate over residues 1 to 17; that stretch reads MTDDRDKTNEDPEKIIE. Residues 1–28 form a disordered region; sequence MTDDRDKTNEDPEKIIEADFNPEDPDDA. In terms of domain architecture, Lon N-terminal spans 49-245; the sequence is LPIIPLRPRP…KVLVLLKKEL (197 aa). 398–405 is a binding site for ATP; sequence GPPGVGKT. Residues 633–814 form the Lon proteolytic domain; that stretch reads EDVPGVVTGL…YRDVYQVAFG (182 aa). Catalysis depends on residues serine 721 and lysine 764.

The protein belongs to the peptidase S16 family. As to quaternary structure, homohexamer. Organized in a ring with a central cavity.

It is found in the cytoplasm. The catalysed reaction is Hydrolysis of proteins in presence of ATP.. Functionally, ATP-dependent serine protease that mediates the selective degradation of mutant and abnormal proteins as well as certain short-lived regulatory proteins. Required for cellular homeostasis and for survival from DNA damage and developmental changes induced by stress. Degrades polypeptides processively to yield small peptide fragments that are 5 to 10 amino acids long. Binds to DNA in a double-stranded, site-specific manner. In Syntrophotalea carbinolica (strain DSM 2380 / NBRC 103641 / GraBd1) (Pelobacter carbinolicus), this protein is Lon protease 1.